The following is a 633-amino-acid chain: Threonine--tRNA ligase (633 aa).

A TGS domain is found at 1–61 (MINVYFSDNS…TEDCKFEVIT (61 aa)). The tract at residues 242-533 (DHRKIGKELE…LIEHHSGKLP (292 aa)) is catalytic. Cys-333, His-384, and His-510 together coordinate Zn(2+).

It belongs to the class-II aminoacyl-tRNA synthetase family. Homodimer. It depends on Zn(2+) as a cofactor.

Its subcellular location is the cytoplasm. The catalysed reaction is tRNA(Thr) + L-threonine + ATP = L-threonyl-tRNA(Thr) + AMP + diphosphate + H(+). In terms of biological role, catalyzes the attachment of threonine to tRNA(Thr) in a two-step reaction: L-threonine is first activated by ATP to form Thr-AMP and then transferred to the acceptor end of tRNA(Thr). Also edits incorrectly charged L-seryl-tRNA(Thr). The protein is Threonine--tRNA ligase of Ehrlichia ruminantium (strain Welgevonden).